A 316-amino-acid chain; its full sequence is Serpentine receptor class gamma-4 (316 aa).

Transmembrane regions (helical) follow at residues 21–41 (FVYL…IWGT), 50–70 (SFFT…FLDV), 99–121 (IVYP…LSIN), 140–160 (MKKV…NVII), 188–208 (FQII…SITL), 229–249 (TAWI…FAFF), and 258–278 (IFYI…PIVM).

This sequence belongs to the nematode receptor-like protein srg family.

It localises to the membrane. This Caenorhabditis elegans protein is Serpentine receptor class gamma-4 (srg-4).